The following is a 414-amino-acid chain: Putative dipeptidase ARB_02715 (414 aa).

The signal sequence occupies residues 1–20; that stretch reads MAALFVSLLALTSLVPVQGA. Positions 45, 47, and 157 each coordinate Zn(2+). An intrachain disulfide couples Cys-96 to Cys-186. Residue His-184 participates in substrate binding. 2 residues coordinate Zn(2+): His-228 and His-249. The substrate site is built by Arg-260 and Asp-320. A glycan (N-linked (GlcNAc...) asparagine) is linked at Asn-392.

This sequence belongs to the metallo-dependent hydrolases superfamily. Peptidase M19 family. Zn(2+) is required as a cofactor.

It carries out the reaction an L-aminoacyl-L-amino acid + H2O = 2 an L-alpha-amino acid. Hydrolyzes a wide range of dipeptides. The protein is Putative dipeptidase ARB_02715 of Arthroderma benhamiae (strain ATCC MYA-4681 / CBS 112371) (Trichophyton mentagrophytes).